A 620-amino-acid polypeptide reads, in one-letter code: Arginine--tRNA ligase (620 aa).

A 'HIGH' region motif is present at residues 147–157; sequence ANPTGPIHIGG.

This sequence belongs to the class-I aminoacyl-tRNA synthetase family. In terms of assembly, monomer.

The protein resides in the cytoplasm. It catalyses the reaction tRNA(Arg) + L-arginine + ATP = L-arginyl-tRNA(Arg) + AMP + diphosphate. This chain is Arginine--tRNA ligase, found in Bifidobacterium longum subsp. infantis (strain ATCC 15697 / DSM 20088 / JCM 1222 / NCTC 11817 / S12).